A 335-amino-acid polypeptide reads, in one-letter code: Glyceraldehyde-3-phosphate dehydrogenase 2 (335 aa).

Residues 13–14, Asp-35, and Arg-80 contribute to the NAD(+) site; that span reads RI. Phosphoserine occurs at positions 125 and 151. Position 151–153 (151–153) interacts with D-glyceraldehyde 3-phosphate; it reads SCT. Residue Cys-152 is the Nucleophile of the active site. A phosphothreonine mark is found at Thr-153, Thr-154, Thr-182, and Thr-184. Thr-182 serves as a coordination point for D-glyceraldehyde 3-phosphate. 3 positions are modified to phosphoserine: Ser-192, Ser-203, and Ser-209. Thr-211 is subject to Phosphothreonine. D-glyceraldehyde 3-phosphate-binding positions include 211–212 and Arg-234; that span reads TG. Thr-237 carries the post-translational modification Phosphothreonine. The residue at position 241 (Ser-241) is a Phosphoserine. An NAD(+)-binding site is contributed by Asn-316.

This sequence belongs to the glyceraldehyde-3-phosphate dehydrogenase family. Homotetramer.

The protein resides in the cytoplasm. It carries out the reaction D-glyceraldehyde 3-phosphate + phosphate + NAD(+) = (2R)-3-phospho-glyceroyl phosphate + NADH + H(+). It participates in carbohydrate degradation; glycolysis; pyruvate from D-glyceraldehyde 3-phosphate: step 1/5. This Schizosaccharomyces pombe (strain 972 / ATCC 24843) (Fission yeast) protein is Glyceraldehyde-3-phosphate dehydrogenase 2 (gpd3).